The primary structure comprises 122 residues: T-cell receptor beta chain V region C5 (122 aa).

The first 7 residues, 1 to 7 (ILLCAKH), serve as a signal peptide directing secretion. The tract at residues 8–103 (MEAAVTQSPR…TAVYFCASSG (96 aa)) is v segment. Cysteines 31 and 99 form a disulfide. Positions 104 to 108 (TGGAL) are d segment. The interval 109–122 (DTQYFGPGTRLLVL) is j segment.

The chain is T-cell receptor beta chain V region C5 from Mus musculus (Mouse).